Reading from the N-terminus, the 152-residue chain is uncharacterized protein (152 aa).

An N-terminal signal peptide occupies residues 1–24 (MRKMLAYTLYIVTYLTYIMNEVEC).

This is an uncharacterized protein from Acheta domesticus (House cricket).